A 309-amino-acid polypeptide reads, in one-letter code: Pyridoxal kinase (309 aa).

At Thr-2 the chain carries N-acetylthreonine; in Pyridoxal kinase, N-terminally processed. Pyridoxal is bound by residues Ser-23 and Thr-58. Thr-58 contributes to the pyridoxal 5'-phosphate binding site. Asp-124 serves as a coordination point for ATP. Asp-124 provides a ligand contact to Na(+). Asp-129 serves as a coordination point for Mg(2+). Residue Thr-155 coordinates Na(+). ATP is bound by residues 157–160 (NQFE), 193–194 (TS), 225–227 (IPA), and Thr-232. Thr-193 lines the Na(+) pocket. Pyridoxal 5'-phosphate is bound at residue 233–234 (GD). The active-site Proton acceptor is Asp-234.

This sequence belongs to the pyridoxine kinase family. In terms of assembly, homodimer. Zn(2+) serves as cofactor. Expressed ubiquitously in leaves, stems, roots, flowers and siliques. Present in root hairs and other tip-growing cells such as papillar cells on the top of stigma.

It catalyses the reaction pyridoxal + ATP = pyridoxal 5'-phosphate + ADP + H(+). The protein operates within cofactor metabolism; pyridoxal 5'-phosphate salvage; pyridoxal 5'-phosphate from pyridoxal: step 1/1. Its function is as follows. Catalyzes the transfer of a phosphate group from ATP to the 5-hydroxylmethyl group of pyridoxal to form the biologically active pyridoxal phosphate, an active form of vitamin B6. Required for Na(+) and K(+) homeostasis and for salt tolerance. Involved in root hair development, both for initiation and tip growth. In Arabidopsis thaliana (Mouse-ear cress), this protein is Pyridoxal kinase.